Consider the following 412-residue polypeptide: FAD-dependent monooxygenase nscC (412 aa).

Residues 1 to 21 (MGKQQETILIIGAGISGLATS) form the signal peptide. E35 and A46 together coordinate FAD. N92 carries an N-linked (GlcNAc...) asparagine glycan. FAD is bound at residue R119. Residues N170 and N231 are each glycosylated (N-linked (GlcNAc...) asparagine). D326 and G339 together coordinate FAD.

It belongs to the paxM FAD-dependent monooxygenase family. The cofactor is FAD.

Its pathway is secondary metabolite biosynthesis. Its function is as follows. FAD-dependent monooxygenase; part of the gene cluster that mediates the biosynthesis of neosartoricin B, a prenylated anthracenone that probably exhibits T-cell antiproliferative activity, suggestive of a physiological role as an immunosuppressive agent. The non-reducing polyketide synthase nscA probably synthesizes and cyclizes the decaketide backbone. The hydrolase nscB then mediates the product release through hydrolysis followed by spontaneous decarboxylation. The prenyltransferase nscD catalyzes the addition of the dimethylallyl group to the aromatic C5. The FAD-dependent monooxygenase nscC is then responsible for the stereospecific hydroxylation at C2. Neosartoricin B can be converted into two additional compounds neosartoricins C and D. Neosartoricin C is a spirocyclic compound that is cyclized through the attack of C3 hydroxyl on C14, followed by dehydration. On the other hand, neosartoricin D is a further cyclized compound in which attack of C2 on C14 in neosartoricin C results in the formation of the acetal-containing dioxabicyclo-octanone ring. Both of these compounds are novel and possibly represent related metabolites of the gene cluster. This is FAD-dependent monooxygenase nscC from Trichophyton tonsurans (strain CBS 112818) (Scalp ringworm fungus).